The following is an 852-amino-acid chain: Probable inorganic carbon transporter subunit DabA (852 aa).

Positions 370, 372, 554, and 569 each coordinate Zn(2+).

It belongs to the inorganic carbon transporter (TC 9.A.2) DabA family. As to quaternary structure, forms a complex with DabB. It depends on Zn(2+) as a cofactor.

The protein localises to the cell inner membrane. In terms of biological role, part of an energy-coupled inorganic carbon pump. The protein is Probable inorganic carbon transporter subunit DabA of Novosphingobium aromaticivorans (strain ATCC 700278 / DSM 12444 / CCUG 56034 / CIP 105152 / NBRC 16084 / F199).